Consider the following 377-residue polypeptide: Glycine oxidase (377 aa).

FAD-binding positions include 14 to 15 (VI), 34 to 35 (EK), 42 to 43 (AS), 47 to 49 (AGM), and V180. R309 and R336 together coordinate substrate. 334–340 (HYRNGIL) is an FAD binding site.

It belongs to the DAO family. ThiO subfamily. Homotetramer. Requires FAD as cofactor.

The enzyme catalyses glycine + O2 + H2O = glyoxylate + H2O2 + NH4(+). It carries out the reaction N-ethylglycine + O2 + H2O = ethylamine + glyoxylate + H2O2. It catalyses the reaction sarcosine + O2 + H2O = methylamine + glyoxylate + H2O2. The catalysed reaction is D-alanine + O2 + H2O = pyruvate + H2O2 + NH4(+). The protein operates within cofactor biosynthesis; thiamine diphosphate biosynthesis. Is inhibited at high substrate concentration. Its function is as follows. Catalyzes the FAD-dependent oxidative deamination of various amines and D-amino acids to yield the corresponding alpha-keto acids, ammonia/amine, and hydrogen peroxide. Oxidizes glycine, sarcosine (N-methylglycine), N-ethylglycine, D-proline, D-alanine, glycine-ethyl ester, and some other D-amino acids. Does not act on L-proline. Is essential for thiamine biosynthesis since the oxidation of glycine catalyzed by ThiO generates the glycine imine intermediate (dehydroglycine) required for the biosynthesis of the thiazole ring of thiamine pyrophosphate. The protein is Glycine oxidase of Geobacillus kaustophilus (strain HTA426).